The following is a 311-amino-acid chain: GTPase Era (311 aa).

Positions H16–E188 constitute an Era-type G domain. The interval G24–S31 is G1. G24 to S31 serves as a coordination point for GTP. Positions Q50–R54 are G2. A G3 region spans residues D71–G74. GTP is bound by residues D71–L75 and N133–D136. Residues N133–D136 are G4. Residues L166–A168 form a G5 region. In terms of domain architecture, KH type-2 spans L219–P296.

The protein belongs to the TRAFAC class TrmE-Era-EngA-EngB-Septin-like GTPase superfamily. Era GTPase family. In terms of assembly, monomer.

The protein resides in the cytoplasm. It is found in the cell membrane. In terms of biological role, an essential GTPase that binds both GDP and GTP, with rapid nucleotide exchange. Plays a role in 16S rRNA processing and 30S ribosomal subunit biogenesis and possibly also in cell cycle regulation and energy metabolism. This Deinococcus radiodurans (strain ATCC 13939 / DSM 20539 / JCM 16871 / CCUG 27074 / LMG 4051 / NBRC 15346 / NCIMB 9279 / VKM B-1422 / R1) protein is GTPase Era.